A 634-amino-acid chain; its full sequence is Phototropic-responsive NPH3 family protein NPY2 (634 aa).

The BTB domain occupies 29 to 97 (SDISVDVEGS…CYGMTVTLSA (69 aa)). The NPH3 domain maps to 207–488 (DWWVEDLCEL…VQVLFFEQVR (282 aa)). Tyr429 carries the phosphotyrosine modification. Disordered stretches follow at residues 492–517 (SSGSSTPDLPRGMGRELRSCGTYGSS) and 584–634 (QLQS…VSVS). Residues 588–602 (KGGGEKNNGGGGGGS) show a composition bias toward gly residues. Positions 619 to 634 (KTATPSRNLTRRVSVS) are enriched in polar residues.

Belongs to the NPH3 family. Specifically expressed in the hypophysis and the root meristems in the embryos. Highly expressed in primary root tips and radicles.

The protein localises to the cell membrane. It localises to the cytoplasm. It is found in the cytosol. Its pathway is protein modification; protein ubiquitination. Its function is as follows. May act as a substrate-specific adapter of an E3 ubiquitin-protein ligase complex (CUL3-RBX1-BTB) which mediates the ubiquitination and subsequent proteasomal degradation of target proteins. Plays an essential role in auxin-mediated organogenesis and in root gravitropic responses through the control of PIN proteins (e.g. PIN1 and PIN2) polarity in the root tip endodermal cell layer and in shoot epidermis. Recruited to the plasma membrane by PINs (e.g. PIN1 and PIN2) and, in concert with AGC kinases-mediated (e.g. D6PK and PID) PINs phosphorylation, maintains their polarity through limiting lateral diffusion-based escape. This Arabidopsis thaliana (Mouse-ear cress) protein is Phototropic-responsive NPH3 family protein NPY2.